A 171-amino-acid chain; its full sequence is Superoxide dismutase [Cu-Zn] 2 (171 aa).

The first 20 residues, 1–20, serve as a signal peptide directing secretion; sequence MKKLSGVLAGSLLLISASFS. Cu cation is bound by residues histidine 67, histidine 69, and histidine 85. A disulfide bridge connects residues cysteine 74 and cysteine 167. Residues histidine 85, histidine 93, histidine 102, and aspartate 105 each contribute to the Zn(2+) site. Residue histidine 147 coordinates Cu cation.

This sequence belongs to the Cu-Zn superoxide dismutase family. It depends on Cu cation as a cofactor. The cofactor is Zn(2+).

It carries out the reaction 2 superoxide + 2 H(+) = H2O2 + O2. Its function is as follows. Destroys radicals which are normally produced within the cells and which are toxic to biological systems. The protein is Superoxide dismutase [Cu-Zn] 2 (sodC2) of Aquifex aeolicus (strain VF5).